Reading from the N-terminus, the 457-residue chain is Siroheme synthase (457 aa).

Positions 1 to 204 are precorrin-2 dehydrogenase /sirohydrochlorin ferrochelatase; sequence MDHLPIFCQL…NDQKAITETT (204 aa). Residues 22–23 and 43–44 contribute to the NAD(+) site; these read DV and LA. Ser128 bears the Phosphoserine mark. The uroporphyrinogen-III C-methyltransferase stretch occupies residues 216-457; it reads GEVVLVGAGP…RDKLNWFSNH (242 aa). Pro225 lines the S-adenosyl-L-methionine pocket. Residue Asp248 is the Proton acceptor of the active site. The Proton donor role is filled by Lys270. S-adenosyl-L-methionine contacts are provided by residues 301–303, Ile306, 331–332, Met382, and Gly411; these read GGD and TA.

The protein in the N-terminal section; belongs to the precorrin-2 dehydrogenase / sirohydrochlorin ferrochelatase family. This sequence in the C-terminal section; belongs to the precorrin methyltransferase family.

It carries out the reaction uroporphyrinogen III + 2 S-adenosyl-L-methionine = precorrin-2 + 2 S-adenosyl-L-homocysteine + H(+). The catalysed reaction is precorrin-2 + NAD(+) = sirohydrochlorin + NADH + 2 H(+). It catalyses the reaction siroheme + 2 H(+) = sirohydrochlorin + Fe(2+). The protein operates within cofactor biosynthesis; adenosylcobalamin biosynthesis; precorrin-2 from uroporphyrinogen III: step 1/1. It participates in cofactor biosynthesis; adenosylcobalamin biosynthesis; sirohydrochlorin from precorrin-2: step 1/1. It functions in the pathway porphyrin-containing compound metabolism; siroheme biosynthesis; precorrin-2 from uroporphyrinogen III: step 1/1. Its pathway is porphyrin-containing compound metabolism; siroheme biosynthesis; siroheme from sirohydrochlorin: step 1/1. The protein operates within porphyrin-containing compound metabolism; siroheme biosynthesis; sirohydrochlorin from precorrin-2: step 1/1. Its function is as follows. Multifunctional enzyme that catalyzes the SAM-dependent methylations of uroporphyrinogen III at position C-2 and C-7 to form precorrin-2 via precorrin-1. Then it catalyzes the NAD-dependent ring dehydrogenation of precorrin-2 to yield sirohydrochlorin. Finally, it catalyzes the ferrochelation of sirohydrochlorin to yield siroheme. This is Siroheme synthase from Escherichia coli (strain 55989 / EAEC).